Consider the following 118-residue polypeptide: Peptidyl-tRNA hydrolase (118 aa).

Belongs to the PTH2 family.

It localises to the cytoplasm. It catalyses the reaction an N-acyl-L-alpha-aminoacyl-tRNA + H2O = an N-acyl-L-amino acid + a tRNA + H(+). The natural substrate for this enzyme may be peptidyl-tRNAs which drop off the ribosome during protein synthesis. The protein is Peptidyl-tRNA hydrolase of Thermococcus onnurineus (strain NA1).